Here is a 702-residue protein sequence, read N- to C-terminus: MNHTHETIIAGRPMKVEFGKLGMLSDAAILMSYGDTVILTNVNASEKPREGIDFFPLSVEYEERLYSVGKIPGGFIKREGKPSEKAILNGRAIDRPLRPLFPKGYRNDVQVVCTVVSVENDNLPEILAINAASMALCLSSIPFTTPVAAVQVGLIGEEFILNPTSKEREESSLQLTVCATKERVMMIEAGGDEIPEDTMINAIKFGFDKCQDIIKFQEEAVSMFGKEKKVPELHKVPEEIEEAVREFAFDMISESMHITDRDERNAAMDEVKAKINEEFEEKYPDNMSDIGEAVYDMQKEVVRHMLLKEGKRPDGRAFDEVRNIGCEVGLLPRTHGTGLFTRGLTQVMTVATLGAISEIQILDGIGEEESKRYMHHYNFPAYSVGEVRPLRGPGRREIGHGALAERALEPLIPSEAEFPYTIRLVSEVLSSNGSTSQASVCGSTLALLDAGVPIKRPAAGIAMGLITSKDLTEEEVLTDIQGLEDFFGDMDFKVAGTEEGITSIQVDTKIKGLSEKVIHDAIYGARKARLMILDKIKECIPAPREEVSKYAPKTSTLQIDPEKIRDVIGAGGKVINKIIADTGVKIDIKEDGLVYVSSAESEGVKEAVKIIEGLTKEVKSGEIYLGKVTKIAQFGAFVEVLPNKEGLVHISKLDNKRVEKVEDIVSVGDEILVKVTEIDSQGRINLSRKDAIKEAEEENKQQ.

Aspartate 485 and aspartate 491 together coordinate Mg(2+). One can recognise a KH domain in the interval 552–611; it reads PKTSTLQIDPEKIRDVIGAGGKVINKIIADTGVKIDIKEDGLVYVSSAESEGVKEAVKII. Residues 621 to 689 form the S1 motif domain; it reads GEIYLGKVTK…SQGRINLSRK (69 aa).

Belongs to the polyribonucleotide nucleotidyltransferase family. Requires Mg(2+) as cofactor.

The protein localises to the cytoplasm. It carries out the reaction RNA(n+1) + phosphate = RNA(n) + a ribonucleoside 5'-diphosphate. Its function is as follows. Involved in mRNA degradation. Catalyzes the phosphorolysis of single-stranded polyribonucleotides processively in the 3'- to 5'-direction. The chain is Polyribonucleotide nucleotidyltransferase from Clostridium perfringens (strain SM101 / Type A).